A 41-amino-acid polypeptide reads, in one-letter code: SEKPQQELEECQNVCRMKRWSTEMVHRCEKKCEEKFERQQR.

Intrachain disulfides connect Cys11/Cys32 and Cys15/Cys28.

Inhibits bovine trypsin with a Ki of 0.174 nM and trypsin-like proteases from G.mellonella larvae. Has no activity against serine proteases chymotrypsin, subtilisin and elastase. Has no activity against cysteine proteases from beetle gut. The polypeptide is Trypsin inhibitor 2c (Fagopyrum esculentum (Common buckwheat)).